Here is an 802-residue protein sequence, read N- to C-terminus: Copal-8-ol diphosphate hydratase, chloroplastic (802 aa).

A chloroplast-targeting transit peptide spans Met-1–Ser-24. Lys-249 is a binding site for substrate. 2 residues coordinate Mg(2+): Asp-382 and Asp-384. The short motif at Asp-382–Asp-385 is the DXDD motif element. Lys-468 contributes to the substrate binding site.

This sequence belongs to the terpene synthase family. Requires Mg(2+) as cofactor. As to expression, expressed specifically in the secretory cells of the glandular trichomes.

The protein resides in the plastid. It localises to the chloroplast. The enzyme catalyses (2E,6E,10E)-geranylgeranyl diphosphate + H2O = 8-hydroxycopalyl diphosphate. The protein operates within secondary metabolite biosynthesis; terpenoid biosynthesis. Class-II terpene synthase that synthesizes 8-hydroxy-copalyl diphosphate. Involved in the biosynthesis of cis-abienol, a labdane diterpene that can be used as synthesis precursor of ambergris substitution fragance products. In Nicotiana tabacum (Common tobacco), this protein is Copal-8-ol diphosphate hydratase, chloroplastic.